Consider the following 241-residue polypeptide: Chaperone protein HifB (241 aa).

A signal peptide spans 1 to 27; sequence MGKTMFKKTLLFFTALFFTALCAFSAN.

It belongs to the periplasmic pilus chaperone family.

Its subcellular location is the periplasm. Mediates assembly of pili by forming soluble multimeric complexes with pili subunits as an intermediate step in the assembly process. This protein is involved in type B pili (HifA) assembly. This chain is Chaperone protein HifB (hifB), found in Haemophilus influenzae.